Reading from the N-terminus, the 95-residue chain is Small ribosomal subunit protein uS19 (95 aa).

Belongs to the universal ribosomal protein uS19 family.

Its function is as follows. Protein S19 forms a complex with S13 that binds strongly to the 16S ribosomal RNA. This chain is Small ribosomal subunit protein uS19 (rpsS), found in Treponema pallidum (strain Nichols).